The chain runs to 1108 residues: Activity-dependent neuroprotector homeobox protein (1108 aa).

Residues 1 to 685 (MFQLPVNNLG…ASTITLHLVH (685 aa)) are binds to beta-catenin/CTNNB1. Residues lysine 39 and lysine 72 each participate in a glycyl lysine isopeptide (Lys-Gly) (interchain with G-Cter in SUMO2) cross-link. A C2H2-type 1; degenerate zinc finger spans residues 74 to 97 (FCCSACPFSSKFFSAYKSHFRNVH). The residue at position 98 (serine 98) is a Phosphoserine. A C2H2-type 2; degenerate zinc finger spans residues 107–129 (LNCPYCTFNADKKTLETHIKIFH). A disordered region spans residues 133-154 (SSAPSSSLSTFKDKNKNDGLKP). Basic and acidic residues predominate over residues 143 to 154 (FKDKNKNDGLKP). Glycyl lysine isopeptide (Lys-Gly) (interchain with G-Cter in SUMO2) cross-links involve residues lysine 144 and lysine 155. Residues 165-188 (YYCKKCTYRDPLYEIVRKHIYREH) form a C2H2-type 3; degenerate zinc finger. Residues lysine 203, lysine 231, lysine 266, lysine 274, lysine 278, lysine 279, lysine 311, and lysine 335 each participate in a glycyl lysine isopeptide (Lys-Gly) (interchain with G-Cter in SUMO2) cross-link. A C2H2-type 4; degenerate zinc finger spans residues 221-244 (IHCKRCLFMPKSYEALVQHVIEDH). At arginine 348 the chain carries Asymmetric dimethylarginine. Residues 354–361 (NAPVSIPQ) form a neuroprotective peptide; contributes to CTNNB1-binding, but less effective than whole N-terminal region region. Residues 360–438 (PQQSQSVKQL…PAATGPPPSN (79 aa)) are disordered. Glycyl lysine isopeptide (Lys-Gly) (interchain with G-Cter in SUMO2) cross-links involve residues lysine 367 and lysine 407. Over residues 393–422 (SLQTANTSLPPGQVKSPSVSQSQASRVLGQ) the composition is skewed to polar residues. Residues serine 408 and serine 412 each carry the phosphoserine modification. Residue lysine 426 forms a Glycyl lysine isopeptide (Lys-Gly) (interchain with G-Cter in SUMO2) linkage. The segment covering 426–437 (KPPPAATGPPPS) has biased composition (pro residues). Residues 446-468 (KICTICNELFPENVYSVHFEKEH) form a C2H2-type 5; atypical zinc finger. 2 C2H2-type zinc fingers span residues 488–509 (SKCL…MLIH) and 511–534 (LSCP…RMVH). Glycyl lysine isopeptide (Lys-Gly) (interchain with G-Cter in SUMO2) cross-links involve residues lysine 599 and lysine 605. Serine 607 bears the Phosphoserine mark. Glycyl lysine isopeptide (Lys-Gly) (interchain with G-Cter in SUMO2) cross-links involve residues lysine 615, lysine 620, lysine 631, and lysine 657. A C2H2-type 8; atypical zinc finger spans residues 621 to 646 (TLCPLCFSILKGPISDALAHHLRERH). The C2H2-type 9; atypical zinc-finger motif lies at 661 to 685 (YKCIHCLGVYTSNMTASTITLHLVH). The segment at 690 to 711 (GKTQNGQDKTNAPSRLNQSPGL) is disordered. Residues 691–709 (KTQNGQDKTNAPSRLNQSP) are compositionally biased toward polar residues. Lysine 698 is covalently cross-linked (Glycyl lysine isopeptide (Lys-Gly) (interchain with G-Cter in SUMO2)). Serine 708 is modified (phosphoserine). Glycyl lysine isopeptide (Lys-Gly) (interchain with G-Cter in SUMO2) cross-links involve residues lysine 715, lysine 727, and lysine 730. Serine 737 is modified (phosphoserine). Lysine 744 participates in a covalent cross-link: Glycyl lysine isopeptide (Lys-Gly) (interchain with G-Cter in SUMO2). Residues 753–813 (LDPKGHEDDS…SNKRKKCVRD (61 aa)) constitute a DNA-binding region (homeobox). Residue serine 804 is modified to Phosphoserine. Glycyl lysine isopeptide (Lys-Gly) (interchain with G-Cter in SUMO2) cross-links involve residues lysine 806, lysine 828, and lysine 834. Positions 851–880 (KDSRVNASKTVDKKHNLGKEDDSFSDSFEH) are enriched in basic and acidic residues. The segment at 851–1037 (KDSRVNASKT…DTEQLKWKNS (187 aa)) is disordered. Residues serine 875, serine 877, serine 885, serine 888, and serine 904 each carry the phosphoserine modification. Residues lysine 913, lysine 928, and lysine 941 each participate in a glycyl lysine isopeptide (Lys-Gly) (interchain with G-Cter in SUMO2) cross-link. Residues 928-938 (KEEEEEEEEED) show a composition bias toward acidic residues. A compositionally biased stretch (basic and acidic residues) spans 939-959 (GSKYETIHLTEEPAKLMHDAS). A phosphoserine mark is found at serine 959 and serine 961. Polar residues predominate over residues 977–988 (PSESGPGSQQIS). Lysine 1022 is covalently cross-linked (Glycyl lysine isopeptide (Lys-Gly) (interchain with G-Cter in SUMO2)). Residues lysine 1041 and lysine 1048 each carry the N6-acetyllysine; alternate modification. Residues lysine 1041 and lysine 1048 each participate in a glycyl lysine isopeptide (Lys-Gly) (interchain with G-Cter in SUMO2); alternate cross-link. The segment at 1050-1108 (QSQWENASENAERLPNPQIEWQNSTIDSEDGEQFDSMTDGVADPMHGSLTGVKLSSQQA) is disordered. Serine 1077 carries the phosphoserine modification.

Interacts (via N-terminal region) with beta-catenin/CTNNB1 (via the central armadillo domains); interaction is direct and stabilizes CTNNB1 by modulating its phosphorylation by glycogen synthase kinase-3 beta GSK3B. Expressed in the brain, with a higher expression in cerebellum and hippocampus. Weakly expressed in lung, kidney and intestine, and expressed at intermediate level in testis.

The protein localises to the nucleus. Its subcellular location is the chromosome. Its function is as follows. May be involved in transcriptional regulation. May mediate some of the neuroprotective peptide VIP-associated effects involving normal growth and cancer proliferation. Positively modulates WNT-beta-catenin/CTNN1B signaling, acting by regulating phosphorylation of, and thereby stabilizing, CTNNB1. May be required for neural induction and neuronal differentiation. May be involved in erythroid differentiation. This Mus musculus (Mouse) protein is Activity-dependent neuroprotector homeobox protein (Adnp).